The primary structure comprises 282 residues: NADPH-dependent 7-cyano-7-deazaguanine reductase (282 aa).

Substrate is bound at residue Ile88–Ser90. Ser90–Lys91 lines the NADPH pocket. The active-site Thioimide intermediate is Cys190. The active-site Proton donor is the Asp197. His229–Glu230 lines the substrate pocket. Arg258–Gly259 is a binding site for NADPH.

Belongs to the GTP cyclohydrolase I family. QueF type 2 subfamily. As to quaternary structure, homodimer.

Its subcellular location is the cytoplasm. It carries out the reaction 7-aminomethyl-7-carbaguanine + 2 NADP(+) = 7-cyano-7-deazaguanine + 2 NADPH + 3 H(+). Its pathway is tRNA modification; tRNA-queuosine biosynthesis. Catalyzes the NADPH-dependent reduction of 7-cyano-7-deazaguanine (preQ0) to 7-aminomethyl-7-deazaguanine (preQ1). The chain is NADPH-dependent 7-cyano-7-deazaguanine reductase from Escherichia coli (strain SMS-3-5 / SECEC).